We begin with the raw amino-acid sequence, 386 residues long: Acetylornithine aminotransferase (386 aa).

Residues 96–97 (GA) and F123 each bind pyridoxal 5'-phosphate. Residue R126 participates in N(2)-acetyl-L-ornithine binding. Position 208-211 (208-211 (DEVQ)) interacts with pyridoxal 5'-phosphate. K237 is modified (N6-(pyridoxal phosphate)lysine). A N(2)-acetyl-L-ornithine-binding site is contributed by S265. T266 is a binding site for pyridoxal 5'-phosphate.

It belongs to the class-III pyridoxal-phosphate-dependent aminotransferase family. ArgD subfamily. In terms of assembly, homodimer. It depends on pyridoxal 5'-phosphate as a cofactor.

Its subcellular location is the cytoplasm. It catalyses the reaction N(2)-acetyl-L-ornithine + 2-oxoglutarate = N-acetyl-L-glutamate 5-semialdehyde + L-glutamate. The protein operates within amino-acid biosynthesis; L-arginine biosynthesis; N(2)-acetyl-L-ornithine from L-glutamate: step 4/4. The protein is Acetylornithine aminotransferase of Bacillus anthracis.